The chain runs to 276 residues: Undecaprenyl-diphosphatase (276 aa).

7 helical membrane-spanning segments follow: residues 48 to 68 (AANS…AIVF), 92 to 112 (LSIA…FLFE), 119 to 139 (LFSV…MLFA), 155 to 175 (ISYK…WPGF), 196 to 216 (ADFT…LSLV), 225 to 245 (DLMP…LFVV), and 255 to 275 (IKLV…LLIM).

The protein belongs to the UppP family.

The protein resides in the cell membrane. It catalyses the reaction di-trans,octa-cis-undecaprenyl diphosphate + H2O = di-trans,octa-cis-undecaprenyl phosphate + phosphate + H(+). Its function is as follows. Catalyzes the dephosphorylation of undecaprenyl diphosphate (UPP). Confers resistance to bacitracin. The sequence is that of Undecaprenyl-diphosphatase from Bacillus subtilis (strain 168).